Here is a 262-residue protein sequence, read N- to C-terminus: Cytochrome c oxidase subunit 3 (262 aa).

6 consecutive transmembrane segments (helical) span residues 39-59 (YTMT…YQWW), 83-103 (GMIL…WAFF), 120-140 (VGII…ILLA), 163-183 (GLFF…YEYI), 201-221 (ATGF…ICFL), and 240-260 (AWYW…IYWW).

It belongs to the cytochrome c oxidase subunit 3 family. Component of the cytochrome c oxidase (complex IV, CIV), a multisubunit enzyme composed of a catalytic core of 3 subunits and several supernumerary subunits. The complex exists as a monomer or a dimer and forms supercomplexes (SCs) in the inner mitochondrial membrane with ubiquinol-cytochrome c oxidoreductase (cytochrome b-c1 complex, complex III, CIII).

The protein resides in the mitochondrion inner membrane. The enzyme catalyses 4 Fe(II)-[cytochrome c] + O2 + 8 H(+)(in) = 4 Fe(III)-[cytochrome c] + 2 H2O + 4 H(+)(out). Component of the cytochrome c oxidase, the last enzyme in the mitochondrial electron transport chain which drives oxidative phosphorylation. The respiratory chain contains 3 multisubunit complexes succinate dehydrogenase (complex II, CII), ubiquinol-cytochrome c oxidoreductase (cytochrome b-c1 complex, complex III, CIII) and cytochrome c oxidase (complex IV, CIV), that cooperate to transfer electrons derived from NADH and succinate to molecular oxygen, creating an electrochemical gradient over the inner membrane that drives transmembrane transport and the ATP synthase. Cytochrome c oxidase is the component of the respiratory chain that catalyzes the reduction of oxygen to water. Electrons originating from reduced cytochrome c in the intermembrane space (IMS) are transferred via the dinuclear copper A center (CU(A)) of subunit 2 and heme A of subunit 1 to the active site in subunit 1, a binuclear center (BNC) formed by heme A3 and copper B (CU(B)). The BNC reduces molecular oxygen to 2 water molecules using 4 electrons from cytochrome c in the IMS and 4 protons from the mitochondrial matrix. The chain is Cytochrome c oxidase subunit 3 (COIII) from Anopheles quadrimaculatus (Common malaria mosquito).